Reading from the N-terminus, the 191-residue chain is Putative acetyltransferase DDB_G0280825 (191 aa).

It belongs to the transferase hexapeptide repeat family.

The protein is Putative acetyltransferase DDB_G0280825 of Dictyostelium discoideum (Social amoeba).